A 211-amino-acid polypeptide reads, in one-letter code: MTIGVVGRKCGMTRIFTEEGVSIPVTVIEIEPNRVTQFKTEETDGYRAVQVTVGERRASRVTAAQAGHFAKANVAAGRTVMEFRLEDGDYQAGDLINAEIFAAGQLVDVTGQSKGKGFQGTIKRWNFRGQDNTHGNSVSHRVPGSIGQCQTPGRVFKGKKMSGHMGAERVTVQSLEVVRVDAERNLLLVKGAVPGATGGNLVVRPAAKARG.

Glutamine 150 bears the N5-methylglutamine mark.

This sequence belongs to the universal ribosomal protein uL3 family. Part of the 50S ribosomal subunit. Forms a cluster with proteins L14 and L19. In terms of processing, methylated by PrmB.

In terms of biological role, one of the primary rRNA binding proteins, it binds directly near the 3'-end of the 23S rRNA, where it nucleates assembly of the 50S subunit. This is Large ribosomal subunit protein uL3 from Pseudomonas fluorescens (strain SBW25).